A 61-amino-acid chain; its full sequence is uncharacterized protein (61 aa).

The interval 39–61 (PRPFTPGLADPRRLGPRRVQAAQ) is disordered.

This is an uncharacterized protein from Pan troglodytes (Chimpanzee).